Reading from the N-terminus, the 301-residue chain is Ribosomal RNA small subunit methyltransferase A (301 aa).

The S-adenosyl-L-methionine site is built by Asn-29, Leu-31, Gly-56, Glu-77, Asp-102, and Asn-127.

This sequence belongs to the class I-like SAM-binding methyltransferase superfamily. rRNA adenine N(6)-methyltransferase family. RsmA subfamily.

It is found in the cytoplasm. The enzyme catalyses adenosine(1518)/adenosine(1519) in 16S rRNA + 4 S-adenosyl-L-methionine = N(6)-dimethyladenosine(1518)/N(6)-dimethyladenosine(1519) in 16S rRNA + 4 S-adenosyl-L-homocysteine + 4 H(+). In terms of biological role, specifically dimethylates two adjacent adenosines (A1518 and A1519) in the loop of a conserved hairpin near the 3'-end of 16S rRNA in the 30S particle. May play a critical role in biogenesis of 30S subunits. This is Ribosomal RNA small subunit methyltransferase A from Halothermothrix orenii (strain H 168 / OCM 544 / DSM 9562).